Consider the following 202-residue polypeptide: Large ribosomal subunit protein uL13 (202 aa).

It belongs to the universal ribosomal protein uL13 family.

This is Large ribosomal subunit protein uL13 from Caenorhabditis elegans.